Reading from the N-terminus, the 320-residue chain is Cytochrome f (320 aa).

The first 35 residues, 1–35 (MQTRKTFSWIKEEITRSISVLLMIYIITWASISNA), serve as a signal peptide directing secretion. Residues Tyr36, Cys56, Cys59, and His60 each coordinate heme. A helical membrane pass occupies residues 286–306 (VQGLLFFLASVILAQIFLVLK).

The protein belongs to the cytochrome f family. The 4 large subunits of the cytochrome b6-f complex are cytochrome b6, subunit IV (17 kDa polypeptide, petD), cytochrome f and the Rieske protein, while the 4 small subunits are PetG, PetL, PetM and PetN. The complex functions as a dimer. Requires heme as cofactor.

The protein localises to the plastid. The protein resides in the chloroplast thylakoid membrane. Component of the cytochrome b6-f complex, which mediates electron transfer between photosystem II (PSII) and photosystem I (PSI), cyclic electron flow around PSI, and state transitions. This chain is Cytochrome f, found in Manihot esculenta (Cassava).